Consider the following 264-residue polypeptide: 3-methyl-2-oxobutanoate hydroxymethyltransferase (264 aa).

The Mg(2+) site is built by Asp-45 and Asp-84. 3-methyl-2-oxobutanoate contacts are provided by residues 45 to 46 (DS), Asp-84, and Lys-112. Glu-114 contributes to the Mg(2+) binding site. Residue Glu-181 is the Proton acceptor of the active site.

It belongs to the PanB family. As to quaternary structure, homodecamer; pentamer of dimers. The cofactor is Mg(2+).

It localises to the cytoplasm. The catalysed reaction is 3-methyl-2-oxobutanoate + (6R)-5,10-methylene-5,6,7,8-tetrahydrofolate + H2O = 2-dehydropantoate + (6S)-5,6,7,8-tetrahydrofolate. It functions in the pathway cofactor biosynthesis; (R)-pantothenate biosynthesis; (R)-pantoate from 3-methyl-2-oxobutanoate: step 1/2. Functionally, catalyzes the reversible reaction in which hydroxymethyl group from 5,10-methylenetetrahydrofolate is transferred onto alpha-ketoisovalerate to form ketopantoate. The polypeptide is 3-methyl-2-oxobutanoate hydroxymethyltransferase (Shewanella sp. (strain MR-7)).